A 348-amino-acid polypeptide reads, in one-letter code: Dihydroorotase (348 aa).

Zn(2+) is bound by residues histidine 17 and histidine 19. Residues 19 to 21 and asparagine 45 each bind substrate; that span reads HLR. Residues lysine 103, histidine 140, and histidine 178 each contribute to the Zn(2+) site. N6-carboxylysine is present on lysine 103. Residue histidine 140 participates in substrate binding. Leucine 223 is a binding site for substrate. Zn(2+) is bound at residue aspartate 251. Residue aspartate 251 is part of the active site. Positions 255 and 267 each coordinate substrate.

It belongs to the metallo-dependent hydrolases superfamily. DHOase family. Class II DHOase subfamily. In terms of assembly, homodimer. Requires Zn(2+) as cofactor.

The enzyme catalyses (S)-dihydroorotate + H2O = N-carbamoyl-L-aspartate + H(+). It functions in the pathway pyrimidine metabolism; UMP biosynthesis via de novo pathway; (S)-dihydroorotate from bicarbonate: step 3/3. Catalyzes the reversible cyclization of carbamoyl aspartate to dihydroorotate. The polypeptide is Dihydroorotase (Escherichia coli (strain SMS-3-5 / SECEC)).